A 311-amino-acid polypeptide reads, in one-letter code: Salutaridine reductase (311 aa).

Residues 21 to 24 (NKGI), Arg-44, 70 to 71 (DV), and Asn-98 each bind NADP(+). Substrate-binding residues include Tyr-129 and Ser-180. NADP(+)-binding positions include Tyr-236, Lys-240, and 267–272 (VKTEMN). Residue Tyr-236 is the Proton acceptor of the active site. A disulfide bond links Cys-263 and Cys-305.

It belongs to the short-chain dehydrogenases/reductases (SDR) family.

The enzyme catalyses (7S)-salutaridinol + NADP(+) = salutaridine + NADPH + H(+). Its pathway is alkaloid biosynthesis; morphine biosynthesis. Strong substrate inhibition. Was thought to be due to mutually exclusive productive and non-productive modes of substrate binding in the active site. Alternatively, SALR may undergo significant conformational changes during catalytic turnover. Functionally, short-chain dehydrogenases/reductases involved in biosynthesis of morphinan-type benzylisoquinoline and opiate alkaloids natural products. Catalyzes specifically the stereospecific conversion of salutaridine to salutaridinol. The protein is Salutaridine reductase of Papaver somniferum (Opium poppy).